The following is a 488-amino-acid chain: Cobyric acid synthase (488 aa).

One can recognise a GATase cobBQ-type domain in the interval 252-442 (RTRICVPILP…VHGLFASDAF (191 aa)). The active-site Nucleophile is C334. Residue H434 is part of the active site.

This sequence belongs to the CobB/CobQ family. CobQ subfamily.

It participates in cofactor biosynthesis; adenosylcobalamin biosynthesis. In terms of biological role, catalyzes amidations at positions B, D, E, and G on adenosylcobyrinic A,C-diamide. NH(2) groups are provided by glutamine, and one molecule of ATP is hydrogenolyzed for each amidation. This is Cobyric acid synthase from Xanthobacter autotrophicus (strain ATCC BAA-1158 / Py2).